The following is a 135-amino-acid chain: Large ribosomal subunit protein mL54 (135 aa).

A mitochondrion-targeting transit peptide spans 1 to 14 (MAAAHLLRASRVWA).

This sequence belongs to the mitochondrion-specific ribosomal protein mL54 family. In terms of assembly, component of the mitochondrial ribosome large subunit (39S) which comprises a 16S rRNA and about 50 distinct proteins.

The protein resides in the mitochondrion. This is Large ribosomal subunit protein mL54 (Mrpl54) from Mus musculus (Mouse).